A 502-amino-acid polypeptide reads, in one-letter code: Ubiquitin-associated protein 1 (502 aa).

Residues 1-95 are interaction with ESCRT-I; the sequence is MASKKLGADF…AEAKVNSKSG (95 aa). The UMA domain occupies 17-63; that stretch reads LDDVPFKTGDKFKTPAKVGLPIGFSLPDCLQVVREVQYDFSLEKKTI. Residues 86–100 show a composition bias toward basic and acidic residues; sequence AEAKVNSKSGPEGDS. The disordered stretch occupies residues 86 to 117; the sequence is AEAKVNSKSGPEGDSKMSFSKTHSTATMPPPI. Polar residues predominate over residues 102–112; sequence MSFSKTHSTAT. Phosphoserine occurs at positions 146, 205, and 289. The interval 260 to 290 is interaction with PTPN23; it reads VSNIKSLSFPKLDSDDSNQKTAKLASTFHST. UBA domains are found at residues 389–430 and 451–498; these read SPSE…LFAH and QCSE…LMAR.

As to quaternary structure, component of an ESCRT-I complex (endosomal sorting complex required for transport I) which consists of TSG101, VPS28, VPS37A and UBAP1 in a 1:1:1:1 stoichiometry. Interacts with PTPN23. Interacts (via UBA domains) with ubiquitinated proteins. As to expression, ubiquitous. Highly expressed in heart, brain, placenta, lung, liver, skeletal muscle and pancreas.

It localises to the cytoplasm. The protein localises to the cytosol. The protein resides in the endosome. In terms of biological role, component of the ESCRT-I complex, a regulator of vesicular trafficking process. Binds to ubiquitinated cargo proteins and is required for the sorting of endocytic ubiquitinated cargos into multivesicular bodies (MVBs). Plays a role in the proteasomal degradation of ubiquitinated cell-surface proteins, such as EGFR and BST2. The protein is Ubiquitin-associated protein 1 of Homo sapiens (Human).